The sequence spans 259 residues: (3R)-3-hydroxyacyl-CoA dehydrogenase (259 aa).

Residues 13 to 21 (LVTGAGSGI) and 40 to 41 (DL) each bind NAD(+). Serine 58 bears the Phosphoserine mark. Residue lysine 66 is modified to N6-acetyllysine. 72–74 (ADV) is an NAD(+) binding site. Position 154 (serine 154) interacts with substrate. Lysine 158 is modified (N6-succinyllysine). The Proton acceptor role is filled by tyrosine 167. Residues 167–171 (YASSK) and 200–202 (IAT) each bind NAD(+). An N6-succinyllysine modification is found at lysine 171.

The protein belongs to the short-chain dehydrogenases/reductases (SDR) family. As to quaternary structure, heterotetramer with CBR4; contains two molecules of HSD17B8 and CBR4. Expressed in ovary at protein level.

The protein resides in the mitochondrion matrix. The enzyme catalyses a (3R)-3-hydroxyacyl-CoA + NAD(+) = a 3-oxoacyl-CoA + NADH + H(+). It catalyses the reaction 17beta-estradiol + NAD(+) = estrone + NADH + H(+). The catalysed reaction is testosterone + NAD(+) = androst-4-ene-3,17-dione + NADH + H(+). It carries out the reaction 17beta-hydroxy-5alpha-androstan-3-one + NAD(+) = 5alpha-androstan-3,17-dione + NADH + H(+). It functions in the pathway steroid biosynthesis; estrogen biosynthesis. It participates in lipid metabolism; fatty acid biosynthesis. Its pathway is lipid metabolism; mitochondrial fatty acid beta-oxidation. In terms of biological role, required for the solubility and assembly of the heterotetramer 3-ketoacyl-[acyl carrier protein] (ACP) reductase functional complex (KAR or KAR1) that forms part of the mitochondrial fatty acid synthase (mtFAS). Alpha-subunit of the KAR complex that acts as scaffold protein required for the stability of carbonyl reductase type-4 (CBR4, beta-subunit of the KAR complex) and for its 3-ketoacyl-ACP reductase activity, thereby participating in mitochondrial fatty acid biosynthesis. Catalyzes the NAD-dependent conversion of (3R)-3-hydroxyacyl-CoA into 3-ketoacyl-CoA (3-oxoacyl-CoA) with no chain length preference; this enzymatic activity is not needed for the KAR function. Prefers (3R)-3-hydroxyacyl-CoA over (3S)-3-hydroxyacyl-CoA and displays enzymatic activity only in the presence of NAD(+). Cooperates with enoyl-CoA hydratase 1 in mitochondria, together they constitute an alternative route to the auxiliary enzyme pathways for the breakdown of Z-PUFA (cis polyunsaturated fatty acid) enoyl-esters. NAD-dependent 17-beta-hydroxysteroid dehydrogenase with highest activity towards estradiol (17beta-estradiol or E2). Has very low activity towards testosterone and dihydrotestosterone (17beta-hydroxy-5alpha-androstan-3-one). Primarily an oxidative enzyme, it can switch to a reductive mode determined in the appropriate physiologic milieu and catalyze the reduction of estrone (E1) to form biologically active 17beta-estradiol. The sequence is that of (3R)-3-hydroxyacyl-CoA dehydrogenase (Hsd17b8) from Rattus norvegicus (Rat).